The following is a 47-amino-acid chain: GVACLCDADGPSVSGNTLSGILWLAGCPSGWHNCKAHGPTIGWCCKK.

3 disulfide bridges follow: Cys-4/Cys-44, Cys-6/Cys-34, and Cys-27/Cys-45.

It belongs to the sea anemone sodium channel inhibitory toxin family. Type I subfamily.

It is found in the secreted. It localises to the nematocyst. In terms of biological role, binds specifically to voltage-gated sodium channels (Nav), thereby delaying their inactivation. This toxin is active on a variety of voltage-gated sodium channels (Nav1.1/SCN1A, Nav1.2/SCN2A, Nav1.3/SCN3A, Nav1.4/SCN4A, Nav1.5/SCN5A and Nav1.6/SCN8A). In Anthopleura xanthogrammica (Giant green sea anemone), this protein is Delta-actitoxin-Axm1e.